A 529-amino-acid chain; its full sequence is Bifunctional purine biosynthesis protein PurH (529 aa).

Positions 1–148 (MQQRRPVRRA…KNHKDVAIVV (148 aa)) constitute an MGS-like domain.

Belongs to the PurH family.

The enzyme catalyses (6R)-10-formyltetrahydrofolate + 5-amino-1-(5-phospho-beta-D-ribosyl)imidazole-4-carboxamide = 5-formamido-1-(5-phospho-D-ribosyl)imidazole-4-carboxamide + (6S)-5,6,7,8-tetrahydrofolate. The catalysed reaction is IMP + H2O = 5-formamido-1-(5-phospho-D-ribosyl)imidazole-4-carboxamide. It functions in the pathway purine metabolism; IMP biosynthesis via de novo pathway; 5-formamido-1-(5-phospho-D-ribosyl)imidazole-4-carboxamide from 5-amino-1-(5-phospho-D-ribosyl)imidazole-4-carboxamide (10-formyl THF route): step 1/1. Its pathway is purine metabolism; IMP biosynthesis via de novo pathway; IMP from 5-formamido-1-(5-phospho-D-ribosyl)imidazole-4-carboxamide: step 1/1. The polypeptide is Bifunctional purine biosynthesis protein PurH (Salmonella heidelberg (strain SL476)).